Consider the following 284-residue polypeptide: Bifunctional protein FolD (284 aa).

NADP(+) is bound by residues 166–168 (GAS) and isoleucine 232.

The protein belongs to the tetrahydrofolate dehydrogenase/cyclohydrolase family. Homodimer.

The enzyme catalyses (6R)-5,10-methylene-5,6,7,8-tetrahydrofolate + NADP(+) = (6R)-5,10-methenyltetrahydrofolate + NADPH. The catalysed reaction is (6R)-5,10-methenyltetrahydrofolate + H2O = (6R)-10-formyltetrahydrofolate + H(+). It functions in the pathway one-carbon metabolism; tetrahydrofolate interconversion. In terms of biological role, catalyzes the oxidation of 5,10-methylenetetrahydrofolate to 5,10-methenyltetrahydrofolate and then the hydrolysis of 5,10-methenyltetrahydrofolate to 10-formyltetrahydrofolate. This Shewanella halifaxensis (strain HAW-EB4) protein is Bifunctional protein FolD.